The following is a 168-amino-acid chain: uncharacterized protein (168 aa).

The tract at residues 18-73 is disordered; sequence RTTVKTKSHNPKTLYPNNKPRWESKLHAGPKGFQSSRTSEKPGRPDPDPEDDPPIP. A compositionally biased stretch (basic and acidic residues) spans 55–64; sequence TSEKPGRPDP. Transmembrane regions (helical) follow at residues 84–104 and 113–133; these read IVVS…VLEV and VPLW…ALGI.

The protein localises to the membrane. This is an uncharacterized protein from Arabidopsis thaliana (Mouse-ear cress).